The primary structure comprises 1849 residues: Immunoglobulin A1 protease autotransporter (1849 aa).

An N-terminal signal peptide occupies residues 1–25 (MLNKKFKLNFIALTVAYALTPYTEA). In terms of domain architecture, Peptidase S6 spans 26-343 (ALVRDDVDYQ…NIYKHEFAEK (318 aa)). Residue Ser-299 is part of the active site. Residues 998–1538 (VEKRNQTVDT…EPVELPTENA (541 aa)) are disordered. Polar residues predominate over residues 1004–1015 (TVDTTNITTPND). The span at 1066–1077 (EETNTANSTETA) shows a compositional bias: low complexity. Composition is skewed to polar residues over residues 1079–1097 (KSDTATQTENPNSESVPSE) and 1138–1151 (VEANTQTNEATQSE). A compositionally biased stretch (basic and acidic residues) spans 1152-1166 (GKTEETQTAETKSEP). Over residues 1167 to 1184 (TESVTVSENQPEKTVSQS) the composition is skewed to polar residues. Basic and acidic residues predominate over residues 1185–1205 (TEDKVVVEKEEKAKVETEETQ). Residues 1237 to 1268 (ALQQTQPTTVAAAETTSPNSKPAEETQQPSEK) show a composition bias toward polar residues. Positions 1291 to 1301 (ETAKVEKEKTQ) are enriched in basic and acidic residues. 3 stretches are compositionally biased toward low complexity: residues 1314–1330 (QEQPAAKPQAQTKPQAE), 1345–1361 (PQPQAQPQTQSTAVPTT), and 1369–1381 (KPAAKPQAQAKPQ). Over residues 1388 to 1437 (NVSTVNTKEPQSQTSATVSTEQPAKETSSNVEQPAPENSINTGSATTMTE) the composition is skewed to polar residues. A compositionally biased stretch (basic and acidic residues) spans 1438–1457 (TAEKSDKPQMETVTENDRQP). Residues 1493 to 1513 (EETTVASTQETTVDNSVSTPK) are compositionally biased toward low complexity. The Autotransporter domain occupies 1597 to 1849 (NNEGQYNVWI…TAEVKLSFSF (253 aa)).

It localises to the periplasm. The protein resides in the secreted. Its subcellular location is the cell surface. It is found in the cell outer membrane. It catalyses the reaction Cleavage of immunoglobulin A molecules at certain Pro-|-Xaa bonds in the hinge region. No small molecule substrates are known.. Virulence factor; cleaves host immunoglobulin A producing intact Fc and Fab fragments. The protein is Immunoglobulin A1 protease autotransporter (iga) of Haemophilus influenzae.